Reading from the N-terminus, the 280-residue chain is MNKLLNIAQAGHRQFVREYAFKSDLKIKWMRPEKIACYKPEKSGDLAKLPPLKADELLPEYRDCKELDKADESVKSLFKLSNNASYLTTKFYRDEMVKEVQRHAQDFGSMEAKLAKMTAVIRRYQEHMDKHPRDKMIKVRLKELIDKRKKFLKYLRRWDYPRFEWILEKLDLVYKPPPTHFHWITRKESLQKLTDIYCENLKEERLEAYHKQLQAQQIPFLEEAIKKMQFVRQEQISCDVPVTVTEEKIADSKRQLEMLKELQQAEAAASSKKQNEDGFN.

Belongs to the universal ribosomal protein uS15 family. In terms of assembly, component of the mitochondrial ribosome small subunit (28S) which comprises a 12S rRNA and about 30 distinct proteins. In terms of tissue distribution, expressed in anterior and posterior midgut primordia in stage 11 embryos. In stage 13 embryos, expression is high in the developing midgut and hindgut. In stage 16 embryos, expression is elevated in the midgut, hindgut, and in a small region that will give rise to pharyngeal muscles and to the stomatogastric nervous system. In larvae, expression is predominant in the gut, and head, presumably in pharyngeal muscles.

It localises to the mitochondrion. Essential for gut mitochondrial activity. Might be involved in tissue specific growth factor production. This chain is Small ribosomal subunit protein uS15m (bonsai), found in Drosophila melanogaster (Fruit fly).